The chain runs to 3242 residues: tRNA nuclease CdiA (3242 aa).

The signal sequence occupies residues 1–32 (MHQPPVRFTYRLLSYLISTIIAGQPLLPAVGA). The tract at residues 36-322 (PQNGAGMDKA…AGGNLSVTGT (287 aa)) is two-partner system transport domain (TPS). Residues 351–1376 (GELTAGQNAM…IVVRTGHLLN (1026 aa)) form an FHA-1 region. The segment at 1377-1668 (QREGFSATTT…TGQTGISDDW (292 aa)) is receptor-binding domain (RBD). The interval 1668–1852 (WPLPSGNNGY…LSPEDITLHN (185 aa)) is YP domain. The periplasmic FHA-1 repeat (pFR) stretch occupies residues 1853–1913 (GSVISGNNVQ…DLSAIGDISN (61 aa)). An FHA-2 region spans residues 2021–2631 (DNSASSTTSQ…TSKYDSKQTS (611 aa)). A compositionally biased stretch (basic and acidic residues) spans 2075–2091 (RESKNSRNGRSESHESH). Disordered stretches follow at residues 2075–2094 (RESK…HAAV), 2310–2333 (GSSK…STIG), and 2439–2481 (TMAS…NAGN). Residues 2322 to 2333 (GTTQSQSASTIG) are compositionally biased toward polar residues. Residues 2969 to 3242 (GVDPSKLTED…IESALKGYGI (274 aa)) form a DUF638-CT domain; not toxic when added to the outside of E.coli, does not interfere with F-pilus mediated conjugation, toxic when expressed intracellularly region. A pre-toxin (PT) domain region spans residues 2972 to 3015 (PSKLTEDQKQTVSTLATLSAGMAGGIASGDVAGAAAGAGAGKNV). The VENN CT cleavage motif signature appears at 3016 to 3019 (VENN). The segment at 3016-3097 (VENNALSLVA…KYLSSLHDKY (82 aa)) is toxin import domain; sufficient to import the tRNA nuclease domain of colicin E5 into E.coli, may bind F-pili. A CT domain; toxic when added to the outside of E.coli and when expressed intracellularly region spans residues 3016-3242 (VENNALSLVA…IESALKGYGI (227 aa)). An inner membrane translocation domain (IMTD), targets protein to FtsH region spans residues 3020–3141 (ALSLVARGCA…SENDPKQQNE (122 aa)). A C-terminal effector domain (CT) region spans residues 3020–3242 (ALSLVARGCA…IESALKGYGI (223 aa)). A tRNase function, does not interfere with F-pilus mediated conjugation region spans residues 3098 to 3242 (GSGAASNPNI…IESALKGYGI (145 aa)). The disordered stretch occupies residues 3116–3146 (KVELGGSGSGTGTPPPSENDPKQQNEKTVDK). Over residues 3134–3146 (NDPKQQNEKTVDK) the composition is skewed to basic and acidic residues. The stretch at 3137–3238 (KQQNEKTVDK…AINKIESALK (102 aa)) forms a coiled coil. Active-site residues include Asp3170, His3193, and Glu3196.

This sequence in the N-terminal section; belongs to the CdiA toxin family. The C-terminal (CT) domain interacts with cognate CdiI but not non-cognate CdiI from D.dadantii strain 3937. CdiA-CT also interacts with CysK; this is blocked upon preincubation with O-acetyl-L-serine. CysK forms a complex with CdiA-CT/CdiI. One CdiA toxin subunit binds to each subunit of the CysK homodimer, and one CdiI immunity protein binds to each toxin subunit; the immune complex is thus a dimer of trimers. The 4 C-terminal residues of CdiA fit into the active site of CysK. A divalent metal cation serves as cofactor.

Its subcellular location is the secreted. It is found in the target cell membrane. The protein localises to the target cell. It localises to the target cell cytoplasm. Functionally, toxic component of a toxin-immunity protein module, which functions as a cellular contact-dependent growth inhibition (CDI) system. CDI modules allow bacteria to communicate with and inhibit the growth of closely related neighboring bacteria in a contact-dependent fashion (target cell counts decrease 100- to 1000-fold). CdiA toxicity is neutralized by its cognate immunity protein CdiI, but not by CdiI from other bacteria. Uses heterotrimeric OmpC and OmpF as target cell outer membrane receptors; receptor function depends on polymorphisms in extracellular loops L4 and L5 of OmpC; interacts with itself and closely related bacteria but also with OmpC from E.cloacae ATCC 13047. Its ability to preferentially bind to 'self' receptors suggests it may also play a role in self-recognition and kin selection. A bamA mutation that decreases its expression about 5-fold is partially resistant to this strain of CdiA, probably due to decreased outer membrane receptor protein assembly. Isolated CdiA-CT is imported in an F-pilus-mediated fashion; CdiA-CT inhibits F-mediated conjugation, probably via its N-terminus (residues 3016-3097), although it is not clear if this is physiologically significant. Gains access to the cytoplasm of target cells by using integral inner membrane protein FtsH. The C-terminal domain (CT) cleaves within tRNA anticodon loops; this activity is inhibited by cognate CdiI. tRNase activity of CdiA-CT is stimulated by CysK, although the extreme C-terminus (residues 3098-3242) has tRNase activity in the absence of CysK. In vivo CDI toxicity requires CysK. CysK stabilizes CdiA-CT, allowing it to bind tRNA substrate; neither CdiA-CT nor CysK bind tRNA alone in vitro. Purified CdiA-CT (residues 3016-3242) inhibits E.coli cell growth when added to cultures alone or in complex with cognate CdiI, growth is inhibited when cognate CdiI is present within the cell but not when a CdiA-CT/CdiI complex is added extracellularly, suggesting CdiA-CT alone but not the CdiA-CT/CdiI complex is imported into the target cell. The CdiA protein is thought to be exported from the cell through the central lumen of CdiB, the other half of its two-partner system (TPS). The TPS domain probably remains associated with CdiB while the FHA-1 domain forms an extended filament with the receptor-binding domain (RBD) at its extremity; in the secretion arrested state the C-terminus of the RBD and YP domains form a hairpin-like structure as the FHA-2, PT and CT domains are periplasmic. The YP domain is probably responsible for this arrest at the point where it re-enters the host cell periplasm. Upon binding to a target cell outer membrane receptor (heterotrimeric OmpC-OmpF for this CDI) a signal is transmitted to activate secretion. The filament elongates slightly, the rest of CdiA is secreted and the FHA-2 domain becomes stably associated with the target cell's outer membrane where it facilitates entry of the toxic CT domain into the target cell periplasm. From there the toxic CT domain is cleaved and gains access to the target cell cytoplasm via an inner membrane protein (FtsH for this CDI). This Escherichia coli O6:K15:H31 (strain 536 / UPEC) protein is tRNA nuclease CdiA.